Here is a 399-residue protein sequence, read N- to C-terminus: Phosphoglycerate kinase (399 aa).

Residues 24-26, R41, 64-67, R123, and R160 contribute to the substrate site; these read DLN and HLGR. Residues K210, G298, E329, and 355–358 contribute to the ATP site; that span reads GGDS.

It belongs to the phosphoglycerate kinase family. Monomer.

Its subcellular location is the cytoplasm. It carries out the reaction (2R)-3-phosphoglycerate + ATP = (2R)-3-phospho-glyceroyl phosphate + ADP. The protein operates within carbohydrate degradation; glycolysis; pyruvate from D-glyceraldehyde 3-phosphate: step 2/5. This Salinispora arenicola (strain CNS-205) protein is Phosphoglycerate kinase.